An 89-amino-acid polypeptide reads, in one-letter code: Small ribosomal subunit protein uS15 (89 aa).

This sequence belongs to the universal ribosomal protein uS15 family. As to quaternary structure, part of the 30S ribosomal subunit. Forms a bridge to the 50S subunit in the 70S ribosome, contacting the 23S rRNA.

In terms of biological role, one of the primary rRNA binding proteins, it binds directly to 16S rRNA where it helps nucleate assembly of the platform of the 30S subunit by binding and bridging several RNA helices of the 16S rRNA. Its function is as follows. Forms an intersubunit bridge (bridge B4) with the 23S rRNA of the 50S subunit in the ribosome. In Nostoc punctiforme (strain ATCC 29133 / PCC 73102), this protein is Small ribosomal subunit protein uS15.